Reading from the N-terminus, the 532-residue chain is Flavin-containing monooxygenase 1 (532 aa).

Ala2 bears the N-acetylalanine mark. Residues 2–510 (AKRVAIVGAG…ARVVQESPSP (509 aa)) are Lumenal-facing. Residues 9-13 (GAGVS), Glu32, 40-41 (LW), and 61-62 (NS) contribute to the FAD site. Residues 60–61 (SN) and 195–198 (SGTD) each bind NADP(+). The helical transmembrane segment at 511–531 (FESFLKVFSFLALLVAIFLIF) threads the bilayer. Leu532 is a topological domain (cytoplasmic).

It belongs to the FMO family. It depends on FAD as a cofactor. Expressed mainly in fetal and adult liver.

It is found in the endoplasmic reticulum membrane. It catalyses the reaction hypotaurine + NADPH + O2 + H(+) = taurine + NADP(+) + H2O. It carries out the reaction hypotaurine + NADH + O2 + H(+) = taurine + NAD(+) + H2O. The enzyme catalyses trimethylamine + NADPH + O2 = trimethylamine N-oxide + NADP(+) + H2O. The catalysed reaction is N,N-dimethylaniline + NADPH + O2 + H(+) = N,N-dimethylaniline N-oxide + NADP(+) + H2O. Broad spectrum monooxygenase that catalyzes the oxygenation of a wide variety of nitrogen- and sulfur-containing compounds including xenobiotics. Catalyzes the S-oxygenation of hypotaurine to produce taurine, an organic osmolyte involved in cell volume regulation as well as a variety of cytoprotective and developmental processes. In vitro, catalyzes the N-oxygenation of trimethylamine (TMA) to produce trimethylamine N-oxide (TMAO) and could therefore participate to the detoxification of this compound that is generated by the action of gut microbiota from dietary precursors such as choline, choline containing compounds, betaine or L-carnitine. The sequence is that of Flavin-containing monooxygenase 1 from Homo sapiens (Human).